The primary structure comprises 101 residues: MAKKSMIERELKRAKLVDKYAAKRAELKAIIYDVNASDEERFDAQLKLQQLPRDSSPVRQRNRCRVTGRPHGFYNKFGLGRNKLREAAMRGDVPGLKKSSW.

The protein belongs to the universal ribosomal protein uS14 family. As to quaternary structure, part of the 30S ribosomal subunit. Contacts proteins S3 and S10.

In terms of biological role, binds 16S rRNA, required for the assembly of 30S particles and may also be responsible for determining the conformation of the 16S rRNA at the A site. This chain is Small ribosomal subunit protein uS14, found in Chromohalobacter salexigens (strain ATCC BAA-138 / DSM 3043 / CIP 106854 / NCIMB 13768 / 1H11).